Reading from the N-terminus, the 461-residue chain is Signal recognition particle receptor FtsY (461 aa).

One copy of the TPR repeat lies at 105-138 (FESLYNVAKIYHQLEKPDKALEYAQRAEKLVPYE). GTP contacts are provided by residues 267 to 274 (GVNGSGKT), 349 to 353 (DTAGR), and 413 to 416 (TKLD).

The protein belongs to the GTP-binding SRP family. FtsY subfamily. As to quaternary structure, part of the signal recognition particle protein translocation system, which is composed of SRP and FtsY.

The protein localises to the cell inner membrane. It localises to the cytoplasm. The enzyme catalyses GTP + H2O = GDP + phosphate + H(+). Involved in targeting and insertion of nascent membrane proteins into the cytoplasmic membrane. Acts as a receptor for the complex formed by the signal recognition particle (SRP) and the ribosome-nascent chain (RNC). This is Signal recognition particle receptor FtsY from Aquifex aeolicus (strain VF5).